Here is a 296-residue protein sequence, read N- to C-terminus: Homeobox protein SIX2 (296 aa).

A DNA-binding region (homeobox) is located at residues 124–183; that stretch reads GEETSYCFKEKSRSVLREWYAHNPYPSPREKRELAEATGLTTTQVSNWFKNRRQRDRAAE. The disordered stretch occupies residues 168 to 284; sequence VSNWFKNRRQ…HHHSLQDSIL (117 aa). A compositionally biased stretch (basic and acidic residues) spans 179-190; that stretch reads DRAAEAKERENS. Low complexity-rich tracts occupy residues 191–206 and 228–237; these read ENSNSSSHNPLASSLN and HSSSSPALLL. The span at 254–264 shows a compositional bias: pro residues; that stretch reads PPGPSAVPVPV.

The protein belongs to the SIX/Sine oculis homeobox family. In terms of assembly, interacts with TCF7L2; in a canonical Wnt signaling independent manner; prevents transcription of differentiation genes in cap mesenchyme. Interacts with OSR1; form a strong repressor complex with TCF7L2, TLE2 and TLE3 to prevent the activation of Wnt/beta-catenin target genes in the cap mesenchyme. Interacts with HOXA11, EYA1 and EYA3. In terms of tissue distribution, expressed in phalangeal tendons, in smooth muscle and in head and body mesenchyme.

The protein localises to the nucleus. Functionally, transcription factor that plays an important role in the development of several organs, including kidney, skull and stomach. During kidney development, maintains cap mesenchyme multipotent nephron progenitor cells in an undifferentiated state by opposing the inductive signals emanating from the ureteric bud and cooperates with WNT9B to promote renewing progenitor cells proliferation. Acts through its interaction with TCF7L2 and OSR1 in a canonical Wnt signaling independent manner preventing transcription of differentiation genes in cap mesenchyme such as WNT4. Also acts independently of OSR1 to activate expression of many cap mesenchyme genes, including itself, GDNF and OSR1. During craniofacial development plays a role in growth and elongation of the cranial base through regulation of chondrocyte differentiation. During stomach organogenesis, controls pyloric sphincter formation and mucosal growth through regulation of a gene network including NKX2-5, BMPR1B, BMP4, SOX9 and GREM1. During branchial arch development, acts to mediate HOXA2 control over the insulin-like growth factor pathway. May also be involved in limb tendon and ligament development. Plays a role in cell proliferation and migration. The protein is Homeobox protein SIX2 (Six2) of Mus musculus (Mouse).